The chain runs to 445 residues: Cytochrome b (445 aa).

Residues 2–49 lie on the Cytoplasmic side of the membrane; it reads SGIPHDHYEPRTGIEKWLHSRLPIVALAYDTIMIPTPRNLNWMWIWGV. Residues 50–67 form a helical membrane-spanning segment; that stretch reads VLAFCLVLQIVTGIVLAM. The Periplasmic portion of the chain corresponds to 68 to 94; it reads HYTPHVDLAFASVEHIMRNVNGGFMLR. A helical membrane pass occupies residues 95-113; it reads YLHANGASLFFIAVYLHIF. Residues H97 and H111 each coordinate heme b. At 114 to 129 the chain is on the cytoplasmic side; sequence RGLYYGSYKAPREVTW. A helical membrane pass occupies residues 130–149; the sequence is IVGMLIYLAMMATAFMGYVL. Residues 150–193 are Periplasmic-facing; the sequence is PWGQMSFWGATVITGLFGAIPGIGHSIQTWLLGGPAVDNATLNR. A helical transmembrane segment spans residues 194–216; it reads FFSLHYLLPFVIAALVAIHIWAF. Residues H198 and H212 each contribute to the heme b site. Topologically, residues 217–252 are cytoplasmic; the sequence is HSTGNNNPTGVEVRRTSKAEAQKDTVPFWPYFIIKD. Residues 253 to 270 form a helical membrane-spanning segment; that stretch reads VFALAVVLLVFFAIVGFM. At 271–329 the chain is on the periplasmic side; sequence PNYLGHPDNYIEANPLSTPAHIVPEWYFLPFYAILRAFTADVWVVQIANFISFGIIDAK. A helical transmembrane segment spans residues 330–346; the sequence is FFGVLAMFGAILVMALV. Residues 347 to 364 lie on the Cytoplasmic side of the membrane; that stretch reads PWLDTSPVRSGRYRPMFK. The chain crosses the membrane as a helical span at residues 365-382; the sequence is IYFWLLAADFVILTWVGA. Topologically, residues 383 to 388 are periplasmic; it reads QQTTFP. Residues 389 to 408 traverse the membrane as a helical segment; the sequence is YDWISLIASAYWFAYFLVIL. Topologically, residues 409-445 are cytoplasmic; the sequence is PILGAIEKPVAPPATIEEDFNAHYSPATGGTKTVVAE.

It belongs to the cytochrome b family. In terms of assembly, the main subunits of complex b-c1 are: cytochrome b, cytochrome c1 and the Rieske protein. Heme b is required as a cofactor.

It is found in the cell membrane. Functionally, component of the ubiquinol-cytochrome c reductase complex (complex III or cytochrome b-c1 complex), which is a respiratory chain that generates an electrochemical potential coupled to ATP synthesis. The chain is Cytochrome b (petB) from Cereibacter sphaeroides (Rhodobacter sphaeroides).